A 400-amino-acid polypeptide reads, in one-letter code: Enoyl-[acyl-carrier-protein] reductase [NADH] (400 aa).

NAD(+) is bound by residues 48-53 (GSSSGY), 74-75 (FE), 111-112 (DA), and 139-140 (LA). Tyr-225 is a substrate binding site. The Proton donor role is filled by Tyr-235. Residues Lys-244 and 273 to 275 (VVT) contribute to the NAD(+) site.

This sequence belongs to the TER reductase family. In terms of assembly, monomer.

The enzyme catalyses a 2,3-saturated acyl-[ACP] + NAD(+) = a (2E)-enoyl-[ACP] + NADH + H(+). The protein operates within lipid metabolism; fatty acid biosynthesis. Functionally, involved in the final reduction of the elongation cycle of fatty acid synthesis (FAS II). Catalyzes the reduction of a carbon-carbon double bond in an enoyl moiety that is covalently linked to an acyl carrier protein (ACP). In Shewanella denitrificans (strain OS217 / ATCC BAA-1090 / DSM 15013), this protein is Enoyl-[acyl-carrier-protein] reductase [NADH].